The following is a 274-amino-acid chain: MEALRQRIEAAFEARADITPSTVDASVRNDVQNVINMLDKGELRVAEKIDGQWHVHQWLKKAVLLSFRIFDNAVIDGAETKYFDKVPLKFAEYDEARFKAEAIRVVPSATVRKGSFIGKNTVLMPSYVNLGAYVDEGTMVDTWATVGSCAQIGKNVHLSGGVGIGGVLEPLQAGPTIIEDNCFIGARSEIVEGVVVEEGSVISMGVYIGQSTRIYDRETGEIHYGRVPAGSVVVSGNLPSACGKYSLYAAIIVKKVDAKTRGKVGINELLRIVD.

Arg-104 and Asp-141 together coordinate substrate.

This sequence belongs to the transferase hexapeptide repeat family. As to quaternary structure, homotrimer.

The protein localises to the cytoplasm. It catalyses the reaction (S)-2,3,4,5-tetrahydrodipicolinate + succinyl-CoA + H2O = (S)-2-succinylamino-6-oxoheptanedioate + CoA. Its pathway is amino-acid biosynthesis; L-lysine biosynthesis via DAP pathway; LL-2,6-diaminopimelate from (S)-tetrahydrodipicolinate (succinylase route): step 1/3. The polypeptide is 2,3,4,5-tetrahydropyridine-2,6-dicarboxylate N-succinyltransferase (Shewanella sp. (strain ANA-3)).